The sequence spans 178 residues: Orotate phosphoribosyltransferase (178 aa).

5-phospho-alpha-D-ribose 1-diphosphate-binding positions include R92, K93, K96, and 118 to 126 (EDVTTTGGS). Residues T122 and R150 each contribute to the orotate site.

It belongs to the purine/pyrimidine phosphoribosyltransferase family. PyrE subfamily. In terms of assembly, homodimer. Mg(2+) is required as a cofactor.

It catalyses the reaction orotidine 5'-phosphate + diphosphate = orotate + 5-phospho-alpha-D-ribose 1-diphosphate. The protein operates within pyrimidine metabolism; UMP biosynthesis via de novo pathway; UMP from orotate: step 1/2. Its function is as follows. Catalyzes the transfer of a ribosyl phosphate group from 5-phosphoribose 1-diphosphate to orotate, leading to the formation of orotidine monophosphate (OMP). The protein is Orotate phosphoribosyltransferase of Methanosphaera stadtmanae (strain ATCC 43021 / DSM 3091 / JCM 11832 / MCB-3).